A 198-amino-acid polypeptide reads, in one-letter code: ATP-dependent Clp protease proteolytic subunit (198 aa).

Ser-101 functions as the Nucleophile in the catalytic mechanism. The active site involves His-126.

Belongs to the peptidase S14 family. As to quaternary structure, component of the chloroplastic Clp protease core complex.

The protein localises to the plastid. It is found in the chloroplast stroma. The enzyme catalyses Hydrolysis of proteins to small peptides in the presence of ATP and magnesium. alpha-casein is the usual test substrate. In the absence of ATP, only oligopeptides shorter than five residues are hydrolyzed (such as succinyl-Leu-Tyr-|-NHMec, and Leu-Tyr-Leu-|-Tyr-Trp, in which cleavage of the -Tyr-|-Leu- and -Tyr-|-Trp bonds also occurs).. Its function is as follows. Cleaves peptides in various proteins in a process that requires ATP hydrolysis. Has a chymotrypsin-like activity. Plays a major role in the degradation of misfolded proteins. The sequence is that of ATP-dependent Clp protease proteolytic subunit from Solanum bulbocastanum (Wild potato).